Consider the following 208-residue polypeptide: dITP/XTP pyrophosphatase (208 aa).

Residue 7 to 12 (SNNAKK) coordinates substrate. 2 residues coordinate Mg(2+): Glu-39 and Asp-68. Asp-68 serves as the catalytic Proton acceptor. Substrate contacts are provided by residues Ser-69, 162-165 (FGYD), Lys-185, and 190-191 (HR).

The protein belongs to the HAM1 NTPase family. As to quaternary structure, homodimer. The cofactor is Mg(2+).

It catalyses the reaction XTP + H2O = XMP + diphosphate + H(+). It carries out the reaction dITP + H2O = dIMP + diphosphate + H(+). The enzyme catalyses ITP + H2O = IMP + diphosphate + H(+). Pyrophosphatase that catalyzes the hydrolysis of nucleoside triphosphates to their monophosphate derivatives, with a high preference for the non-canonical purine nucleotides XTP (xanthosine triphosphate), dITP (deoxyinosine triphosphate) and ITP. Seems to function as a house-cleaning enzyme that removes non-canonical purine nucleotides from the nucleotide pool, thus preventing their incorporation into DNA/RNA and avoiding chromosomal lesions. In Methylibium petroleiphilum (strain ATCC BAA-1232 / LMG 22953 / PM1), this protein is dITP/XTP pyrophosphatase.